A 633-amino-acid polypeptide reads, in one-letter code: Mini-chromosome maintenance complex-binding protein (633 aa).

The disordered stretch occupies residues 154–198 (PSTSYTPSRHKRSYEEDEDMEQHPSKQKEQHMGSGGDSHGCGEPK). The segment covering 174–184 (EQHPSKQKEQH) has biased composition (basic and acidic residues).

This sequence belongs to the MCMBP family. Interacts with the MCM complex: associates with the MCM3-7 complex which lacks MCM2, while it does not interact with the MCM complex when MCM2 is present (MCM2-7 complex).

The protein localises to the nucleus. Associated component of the MCM complex that acts as a regulator of DNA replication. Binds to the MCM complex during late S phase and promotes the disassembly of the MCM complex from chromatin, thereby acting as a key regulator of pre-replication complex (pre-RC) unloading from replicated DNA. Can dissociate the MCM complex without addition of ATP; probably acts by destabilizing interactions of each individual subunits of the MCM complex. Required for sister chromatid cohesion. This Gallus gallus (Chicken) protein is Mini-chromosome maintenance complex-binding protein (MCMBP).